A 439-amino-acid chain; its full sequence is Glutamate--tRNA ligase 2 (439 aa).

The short motif at 6 to 16 (PSPTGDMHIGN) is the 'HIGH' region element. Positions 232–236 (KMSKR) match the 'KMSKS' region motif. Lys235 contacts ATP.

The protein belongs to the class-I aminoacyl-tRNA synthetase family. Glutamate--tRNA ligase type 1 subfamily. Monomer.

The protein resides in the cytoplasm. It catalyses the reaction tRNA(Glu) + L-glutamate + ATP = L-glutamyl-tRNA(Glu) + AMP + diphosphate. Its function is as follows. Catalyzes the attachment of glutamate to tRNA(Glu) in a two-step reaction: glutamate is first activated by ATP to form Glu-AMP and then transferred to the acceptor end of tRNA(Glu). This Helicobacter pylori (strain P12) protein is Glutamate--tRNA ligase 2.